A 248-amino-acid chain; its full sequence is 1-(5-phosphoribosyl)-5-[(5-phosphoribosylamino)methylideneamino] imidazole-4-carboxamide isomerase (248 aa).

The active-site Proton acceptor is the aspartate 8. Residue aspartate 129 is the Proton donor of the active site.

Belongs to the HisA/HisF family.

It localises to the cytoplasm. The enzyme catalyses 1-(5-phospho-beta-D-ribosyl)-5-[(5-phospho-beta-D-ribosylamino)methylideneamino]imidazole-4-carboxamide = 5-[(5-phospho-1-deoxy-D-ribulos-1-ylimino)methylamino]-1-(5-phospho-beta-D-ribosyl)imidazole-4-carboxamide. The protein operates within amino-acid biosynthesis; L-histidine biosynthesis; L-histidine from 5-phospho-alpha-D-ribose 1-diphosphate: step 4/9. This is 1-(5-phosphoribosyl)-5-[(5-phosphoribosylamino)methylideneamino] imidazole-4-carboxamide isomerase from Rhizobium leguminosarum bv. trifolii (strain WSM2304).